A 443-amino-acid chain; its full sequence is 26S proteasome regulatory subunit rpn501 (443 aa).

At Ser-209 the chain carries Phosphoserine. The PCI domain occupies 230-402 (DVCKYYRAVY…QVISFKKSQN (173 aa)).

It belongs to the proteasome subunit p55 family.

It localises to the nucleus. In terms of biological role, acts as a regulatory subunit of the 26S proteasome which is involved in the ATP-dependent degradation of ubiquitinated proteins. Required for proper proteasome assembly. This is 26S proteasome regulatory subunit rpn501 (rpn501) from Schizosaccharomyces pombe (strain 972 / ATCC 24843) (Fission yeast).